We begin with the raw amino-acid sequence, 662 residues long: PAN2-PAN3 deadenylation complex subunit PAN3 (662 aa).

Disordered regions lie at residues 1–26 and 59–131; these read MASA…AREN and TTYQ…RAET. The C3H1-type zinc finger occupies 26 to 55; the sequence is NAKDTLCRNVTIYGRCRYEDKGCAFNHDPH. A compositionally biased stretch (polar residues) spans 72–85; the sequence is DSPSFTPSLLSSNG. The span at 86-102 shows a compositional bias: low complexity; that stretch reads SSPTTASVTAKKAATIS. The segment covering 114–126 has biased composition (polar residues); the sequence is RNITSRSNTSTPS. The tract at residues 265–525 is pseudokinase domain; sequence QTLPNTQLPA…NIDIFITGIS (261 aa). ATP is bound by residues R317, 366–373, and 425–426; these read DYHPLSKT and SK. Residues 526 to 564 are a coiled coil; sequence SQLMSTFDSALHLDDELTSDLSRELENGRLVRLVTKLNF. A knob domain region spans residues 565–662; that stretch reads VNERPEYEHD…ALLKPTRRLH (98 aa).

Belongs to the protein kinase superfamily. PAN3 family. Homodimer. Forms a heterotrimer with a catalytic subunit pan2 to form the poly(A)-nuclease (PAN) deadenylation complex. Interacts (via PAM-2 motif) with poly(A)-binding protein pab1 (via PABC domain), conferring substrate specificity of the enzyme complex.

It is found in the cytoplasm. Regulatory subunit of the poly(A)-nuclease (PAN) deadenylation complex, one of two cytoplasmic mRNA deadenylases involved in mRNA turnover. PAN specifically shortens poly(A) tails of RNA and the activity is stimulated by poly(A)-binding protein pab1. PAN deadenylation is followed by rapid degradation of the shortened mRNA tails by the CCR4-NOT complex. Deadenylated mRNAs are then degraded by two alternative mechanisms, namely exosome-mediated 3'-5' exonucleolytic degradation, or deadenylation-dependent mRNA decaping and subsequent 5'-3' exonucleolytic degradation by xrn1. May also be involved in post-transcriptional maturation of mRNA poly(A) tails. pan3 acts as a positive regulator for PAN activity, recruiting the catalytic subunit pan2 to mRNA via its interaction with RNA and with pab1. This chain is PAN2-PAN3 deadenylation complex subunit PAN3, found in Aspergillus oryzae (strain ATCC 42149 / RIB 40) (Yellow koji mold).